Reading from the N-terminus, the 96-residue chain is Ubiquitin-related modifier 1 (96 aa).

Gly96 carries the post-translational modification 1-thioglycine. Gly96 is covalently cross-linked (Glycyl lysine isopeptide (Gly-Lys) (interchain with K-? in acceptor proteins)).

It belongs to the URM1 family. Post-translationally, C-terminal thiocarboxylation occurs in 2 steps, it is first acyl-adenylated (-COAMP) via the hesA/moeB/thiF part of UBA4, then thiocarboxylated (-COSH) via the rhodanese domain of UBA4.

Its subcellular location is the cytoplasm. It participates in tRNA modification; 5-methoxycarbonylmethyl-2-thiouridine-tRNA biosynthesis. Functionally, acts as a sulfur carrier required for 2-thiolation of mcm(5)S(2)U at tRNA wobble positions of cytosolic tRNA(Lys), tRNA(Glu) and tRNA(Gln). Serves as sulfur donor in tRNA 2-thiolation reaction by being thiocarboxylated (-COSH) at its C-terminus by the MOCS3 homolog UBA4. The sulfur is then transferred to tRNA to form 2-thiolation of mcm(5)S(2)U. Prior mcm(5) tRNA modification by the elongator complex is required for 2-thiolation. Also acts as a ubiquitin-like protein (UBL) that is covalently conjugated via an isopeptide bond to lysine residues of target proteins such as AHP1. The thiocarboxylated form serves as substrate for conjugation and oxidative stress specifically induces the formation of UBL-protein conjugates. The polypeptide is Ubiquitin-related modifier 1 (Encephalitozoon cuniculi (strain GB-M1) (Microsporidian parasite)).